The following is a 120-amino-acid chain: Large ribosomal subunit protein bL17 (120 aa).

Belongs to the bacterial ribosomal protein bL17 family. As to quaternary structure, part of the 50S ribosomal subunit. Contacts protein L32.

In Bacillus licheniformis (strain ATCC 14580 / DSM 13 / JCM 2505 / CCUG 7422 / NBRC 12200 / NCIMB 9375 / NCTC 10341 / NRRL NRS-1264 / Gibson 46), this protein is Large ribosomal subunit protein bL17.